Here is a 127-residue protein sequence, read N- to C-terminus: UPF0102 protein Mmar10_3014 (127 aa).

Belongs to the UPF0102 family.

The chain is UPF0102 protein Mmar10_3014 from Maricaulis maris (strain MCS10) (Caulobacter maris).